The following is a 485-amino-acid chain: CCA-adding enzyme (485 aa).

ATP is bound by residues serine 53 and arginine 56. The CTP site is built by serine 53 and arginine 56. 3 residues coordinate Mg(2+): aspartate 65, aspartate 67, and aspartate 124. Positions 146, 164, and 173 each coordinate ATP. Residues histidine 146, lysine 164, and tyrosine 173 each contribute to the CTP site.

It belongs to the tRNA nucleotidyltransferase/poly(A) polymerase family. Archaeal CCA-adding enzyme subfamily. In terms of assembly, homodimer. Mg(2+) serves as cofactor.

The catalysed reaction is a tRNA precursor + 2 CTP + ATP = a tRNA with a 3' CCA end + 3 diphosphate. It carries out the reaction a tRNA with a 3' CCA end + 2 CTP + ATP = a tRNA with a 3' CCACCA end + 3 diphosphate. In terms of biological role, catalyzes the addition and repair of the essential 3'-terminal CCA sequence in tRNAs without using a nucleic acid template. Adds these three nucleotides in the order of C, C, and A to the tRNA nucleotide-73, using CTP and ATP as substrates and producing inorganic pyrophosphate. tRNA 3'-terminal CCA addition is required both for tRNA processing and repair. Also involved in tRNA surveillance by mediating tandem CCA addition to generate a CCACCA at the 3' terminus of unstable tRNAs. While stable tRNAs receive only 3'-terminal CCA, unstable tRNAs are marked with CCACCA and rapidly degraded. This chain is CCA-adding enzyme, found in Methanopyrus kandleri (strain AV19 / DSM 6324 / JCM 9639 / NBRC 100938).